A 240-amino-acid polypeptide reads, in one-letter code: Serine protease SplB (240 aa).

The N-terminal stretch at 1-36 (MNKNVVIKSLATLTILTSVTGIGTTLVEEVQQTAKA) is a signal peptide. Residues His75, Asp113, and Ser193 each act as charge relay system in the active site.

This sequence belongs to the peptidase S1B family.

It is found in the secreted. In terms of biological role, serine protease that cleaves specifically after the sequence Trp-Glu-Leu-Gln. This is Serine protease SplB (splB) from Staphylococcus aureus (strain Mu3 / ATCC 700698).